Reading from the N-terminus, the 216-residue chain is Octanoyltransferase (216 aa).

Residues glutamate 34 to histidine 209 form the BPL/LPL catalytic domain. Substrate contacts are provided by residues arginine 73–histidine 80, serine 140–glycine 142, and glycine 153–alanine 155. Cysteine 171 functions as the Acyl-thioester intermediate in the catalytic mechanism.

The protein belongs to the LipB family.

The protein resides in the cytoplasm. The catalysed reaction is octanoyl-[ACP] + L-lysyl-[protein] = N(6)-octanoyl-L-lysyl-[protein] + holo-[ACP] + H(+). It participates in protein modification; protein lipoylation via endogenous pathway; protein N(6)-(lipoyl)lysine from octanoyl-[acyl-carrier-protein]: step 1/2. In terms of biological role, catalyzes the transfer of endogenously produced octanoic acid from octanoyl-acyl-carrier-protein onto the lipoyl domains of lipoate-dependent enzymes. Lipoyl-ACP can also act as a substrate although octanoyl-ACP is likely to be the physiological substrate. This is Octanoyltransferase from Psychromonas ingrahamii (strain DSM 17664 / CCUG 51855 / 37).